A 268-amino-acid polypeptide reads, in one-letter code: MKNKLIIGRYLPINSFVHHLDPRAKLMFVFLFIILIFFCHSPLTYLWVFALILFIMRLAKIQLWFLIKGLTPIFFFLIFTLMMHIFLTKGGYVLVEWHGITIETNGILEGLYISLRLIGIVMIATIMTLSTSPIDLTDAFERLLAPLKMFKLPVHQLSMIMSIALRFIPTLMDELDKIILAQKSRGSEISSGNIATRIKSFIPLLVPLFISAFQRAEELAVAMEVRGYDANVKRTSYRQLKWQLRDTISLTMIIPIAIILFVLKYSGV.

Transmembrane regions (helical) follow at residues 28-48, 63-83, 107-127, 152-172, and 248-268; these read FVFL…YLWV, LWFL…TLMM, ILEG…ATIM, LPVH…PTLM, and ISLT…YSGV.

The protein belongs to the energy-coupling factor EcfT family. As to quaternary structure, forms a stable energy-coupling factor (ECF) transporter complex composed of 2 membrane-embedded substrate-binding proteins (S component), 2 ATP-binding proteins (A component) and 2 transmembrane proteins (T component). May be able to interact with more than 1 S component at a time.

The protein resides in the cell membrane. In terms of biological role, transmembrane (T) component of an energy-coupling factor (ECF) ABC-transporter complex. Unlike classic ABC transporters this ECF transporter provides the energy necessary to transport a number of different substrates. This is Energy-coupling factor transporter transmembrane protein EcfT from Staphylococcus aureus (strain 04-02981).